The primary structure comprises 138 residues: DASH complex subunit DAD2 (138 aa).

Residues 1–14 show a composition bias toward polar residues; that stretch reads MSGFSSRPLSTHLR. Disordered stretches follow at residues 1 to 25 and 116 to 138; these read MSGF…QGQS and PTEH…SGRG.

It belongs to the DASH complex DAD2 family. In terms of assembly, component of the DASH complex consisting of ASK1, DAD1, DAD2, DAD3, DAD4, DAM1, DUO1, HSK3, SPC19 and SPC34, with a stoichiometry of one copy of each subunit per complex. Multiple DASH complexes oligomerize to form a ring that encircles spindle microtubules and organizes the rod-like NDC80 complexes of the outer kinetochore. DASH complex oligomerization strengthens microtubule attachments. On cytoplasmic microtubules, DASH complexes appear to form patches instead of rings.

Its subcellular location is the chromosome. The protein resides in the centromere. The protein localises to the kinetochore. It localises to the cytoplasm. It is found in the cytoskeleton. Its subcellular location is the spindle. The protein resides in the nucleus. Component of the DASH complex that connects microtubules with kinetochores and couples microtubule depolymerisation to chromosome movement; it is involved in retrieving kinetochores to the spindle poles before their re-orientation on the spindle in early mitosis and allows microtubule depolymerization to pull chromosomes apart and resist detachment during anaphase. Kinetochores, consisting of a centromere-associated inner segment and a microtubule-contacting outer segment, play a crucial role in chromosome segregation by mediating the physical connection between centromeric DNA and microtubules. Kinetochores also serve as an input point for the spindle assembly checkpoint, which delays anaphase until all chromosomes have bioriented on the mitotic spindle. In Chaetomium thermophilum (strain DSM 1495 / CBS 144.50 / IMI 039719) (Thermochaetoides thermophila), this protein is DASH complex subunit DAD2.